The primary structure comprises 253 residues: Sulfate transporter CysZ (253 aa).

The next 4 membrane-spanning stretches (helical) occupy residues 31-51 (FVIL…WWLF), 75-95 (LLWP…FSTI), 151-171 (IVLL…PVLW), and 222-242 (IPLL…AMWV).

It belongs to the CysZ family.

The protein localises to the cell inner membrane. High affinity, high specificity proton-dependent sulfate transporter, which mediates sulfate uptake. Provides the sulfur source for the cysteine synthesis pathway. This Escherichia coli O139:H28 (strain E24377A / ETEC) protein is Sulfate transporter CysZ.